The primary structure comprises 486 residues: Histone acetyltransferase type B catalytic subunit DDB_G0274269 (486 aa).

A coiled-coil region spans residues 27–69; it reads DIEELKNKDNKENKDKENKAHIKDEGEEEEQKEKKEEEEKEDD. Over residues 33-50 the composition is skewed to basic and acidic residues; that stretch reads NKDNKENKDKENKAHIKD. The segment at 33 to 78 is disordered; it reads NKDNKENKDKENKAHIKDEGEEEEQKEKKEEEEKEDDGGPISFHPT. The N-acetyltransferase domain occupies 189–386; that stretch reads VVFRYHEKLQ…YRISIKKRLY (198 aa). Acetyl-CoA-binding positions include 260 to 262 and 267 to 273; these read YLI and QRMGHGK. Glu299 (proton donor/acceptor) is an active-site residue. The stretch at 392 to 481 forms a coiled coil; it reads DSEQIEKIKQ…KNYHKTLSSL (90 aa).

This sequence belongs to the HAT1 family.

The catalysed reaction is L-lysyl-[protein] + acetyl-CoA = N(6)-acetyl-L-lysyl-[protein] + CoA + H(+). This chain is Histone acetyltransferase type B catalytic subunit DDB_G0274269, found in Dictyostelium discoideum (Social amoeba).